We begin with the raw amino-acid sequence, 239 residues long: Isopentenyl-diphosphate Delta-isomerase (239 aa).

Lysine 43 lines the substrate pocket. Residues histidine 47 and histidine 58 each contribute to the Mg(2+) site. Residues 56-210 enclose the Nudix hydrolase domain; it reads LLHRAFSIFL…KVKVTPWFRL (155 aa). 2 residues coordinate substrate: arginine 77 and lysine 81. Cysteine 93 is a catalytic residue. Serine 94 serves as a coordination point for substrate. The Mg(2+) site is built by glutamate 156 and glutamate 158. Glutamate 158 is a catalytic residue.

This sequence belongs to the IPP isomerase type 1 family. Requires Mg(2+) as cofactor.

It carries out the reaction isopentenyl diphosphate = dimethylallyl diphosphate. The protein operates within isoprenoid biosynthesis; dimethylallyl diphosphate biosynthesis; dimethylallyl diphosphate from isopentenyl diphosphate: step 1/1. Functionally, catalyzes the 1,3-allylic rearrangement of the homoallylic substrate isopentenyl (IPP) to its highly electrophilic allylic isomer, dimethylallyl diphosphate (DMAPP). The sequence is that of Isopentenyl-diphosphate Delta-isomerase (ipi) from Dictyostelium discoideum (Social amoeba).